Here is a 176-residue protein sequence, read N- to C-terminus: Peptide deformylase (176 aa).

Positions 95 and 137 each coordinate Fe cation. The active site involves Glu-138. Position 141 (His-141) interacts with Fe cation.

Belongs to the polypeptide deformylase family. The cofactor is Fe(2+).

It catalyses the reaction N-terminal N-formyl-L-methionyl-[peptide] + H2O = N-terminal L-methionyl-[peptide] + formate. In terms of biological role, removes the formyl group from the N-terminal Met of newly synthesized proteins. Requires at least a dipeptide for an efficient rate of reaction. N-terminal L-methionine is a prerequisite for activity but the enzyme has broad specificity at other positions. This chain is Peptide deformylase, found in Hyphomonas neptunium (strain ATCC 15444).